Reading from the N-terminus, the 143-residue chain is Transmembrane protein 80 (143 aa).

A run of 4 helical transmembrane segments spans residues 21-41, 55-75, 99-119, and 121-141; these read MLFYLSGTYYALYFLATLLMI, LVLDLALLFLMGILEAVRLYL, ALLSAHFLLWQALVLWADWAL, and ATLLALHGLEAVLQVVAIAAF.

The protein localises to the membrane. It localises to the cell projection. Its subcellular location is the cilium. The chain is Transmembrane protein 80 from Homo sapiens (Human).